Consider the following 478-residue polypeptide: 3-isopropylmalate dehydratase large subunit (478 aa).

3 residues coordinate [4Fe-4S] cluster: Cys347, Cys407, and Cys410.

Belongs to the aconitase/IPM isomerase family. LeuC type 1 subfamily. As to quaternary structure, heterodimer of LeuC and LeuD. It depends on [4Fe-4S] cluster as a cofactor.

It catalyses the reaction (2R,3S)-3-isopropylmalate = (2S)-2-isopropylmalate. The protein operates within amino-acid biosynthesis; L-leucine biosynthesis; L-leucine from 3-methyl-2-oxobutanoate: step 2/4. Functionally, catalyzes the isomerization between 2-isopropylmalate and 3-isopropylmalate, via the formation of 2-isopropylmaleate. The protein is 3-isopropylmalate dehydratase large subunit of Prochlorococcus marinus (strain MIT 9313).